A 308-amino-acid chain; its full sequence is Putative T-box protein 30/42 (308 aa).

Residues 11-192 (MSNEELWKER…KHSTFGNRSE (182 aa)) constitute a DNA-binding region (T-box). Positions 186–220 (TFGNRSEGGIKRKTSDAAGQLPSKRSSKKPVKKDV) are disordered.

It localises to the nucleus. Functionally, involved in the regulatory network to control embryonic patterning and morphogenesis. Implicated in negatively regulating vab-7 expression at the anterior of embryos. The polypeptide is Putative T-box protein 30/42 (tbx-30) (Caenorhabditis elegans).